A 388-amino-acid polypeptide reads, in one-letter code: Beta-1,4-galactosyltransferase 5 (388 aa).

Topologically, residues 1–14 (MRVRRGLLRLPRRS) are cytoplasmic. The helical; Signal-anchor for type II membrane protein transmembrane segment at 15 to 35 (LLAALFFFSLSSSLLYFVYVA) threads the bilayer. At 36 to 388 (PGIVNTYLFM…TPELAQVTEY (353 aa)) the chain is on the lumenal side. Residues N77, N81, N90, N111, and N128 are each glycosylated (N-linked (GlcNAc...) asparagine). C114 and C158 form a disulfide bridge. UDP-alpha-D-galactose-binding positions include 169–173 (PFRNR), 208–210 (FNR), 235–236 (VD), Y264, and W296. Residues C229 and C248 are joined by a disulfide bond. Position 236 (D236) interacts with Mn(2+). 298 to 301 (GEDD) provides a ligand contact to N-acetyl-D-glucosamine. 329 to 330 (YH) serves as a coordination point for UDP-alpha-D-galactose. Residue R340 coordinates N-acetyl-D-glucosamine. N-linked (GlcNAc...) asparagine glycans are attached at residues N364 and N373.

The protein belongs to the glycosyltransferase 7 family. (Microbial infection) Interacts with porcine reproductive and respiratory syndrome virus GP5. It depends on Mn(2+) as a cofactor.

It localises to the golgi apparatus. It is found in the golgi stack membrane. The enzyme catalyses a beta-D-glucosyl-(1&lt;-&gt;1')-N-acylsphing-4-enine + UDP-alpha-D-galactose = a beta-D-Gal-(1-&gt;4)-beta-D-Glc-(1&lt;-&gt;1)-Cer(d18:1(4E)) + UDP + H(+). It participates in protein modification; protein glycosylation. The protein operates within sphingolipid metabolism. In terms of biological role, catalyzes the synthesis of lactosylceramide (LacCer) via the transfer of galactose from UDP-galactose to glucosylceramide (GlcCer). LacCer is the starting point in the biosynthesis of all gangliosides (membrane-bound glycosphingolipids) which play pivotal roles in the CNS including neuronal maturation and axonal and myelin formation. Plays a role in the glycosylation of BMPR1A and regulation of its protein stability. Essential for extraembryonic development during early embryogenesis. (Microbial infection) May play a role in the glycosylation of porcine reproductive and respiratory syndrome virus GP5 protein and may be involved in the regulation of viral proliferation. The sequence is that of Beta-1,4-galactosyltransferase 5 (B4GALT5) from Sus scrofa (Pig).